A 504-amino-acid chain; its full sequence is MGTSIKANVLALFLFYLLSPTVFSVSDDGLIRIGLKKRKVDRIDQLRGRRALMEGNARKDFGFRGTVRDSGSAVVALTNDRDTSYFGEIGIGTPPQKFTVIFDTGSSVLWVPSSKCINSKACRAHSMYESSDSSTYKENGTFGAIIYGTGSITGFFSQDSVTIGDLVVKEQDFIEATDEADNVFLHRLFDGILGLSFQTISVPVWYNMLNQGLVKERRFSFWLNRNVDEEEGGELVFGGLDPNHFRGDHTYVPVTYQYYWQFGIGDVLIGDKSTGFCAPGCQAFADSGTSLLSGPTAIVTQINHAIGANGVMNQQCKTVVSRYGRDIIEMLRSKIQPDKICSHMKLCTFDGARDVSSIIESVVDKNNDKSSGGIHDEMCTFCEMAVVWMQNEIKQSETEDNIINYANELCEHLSTSSEELQVDCNTLSSMPNVSFTIGGKKFGLTPEQYILKVGKGEATQCISGFTAMDATLLGPLWILGDVFMRPYHTVFDYGNLLVGFAEAA.

Residues 1 to 24 (MGTSIKANVLALFLFYLLSPTVFS) form the signal peptide. The propeptide occupies 25–68 (VSDDGLIRIGLKKRKVDRIDQLRGRRALMEGNARKDFGFRGTVR). One can recognise a Peptidase A1 domain in the interval 85-501 (YFGEIGIGTP…DYGNLLVGFA (417 aa)). Aspartate 103 is a catalytic residue. Cysteines 116 and 122 form a disulfide. An N-linked (GlcNAc...) asparagine glycan is attached at asparagine 139. Positions 246 to 248 (RGD) match the RGD motif motif. An intrachain disulfide couples cysteine 277 to cysteine 281. Aspartate 286 is an active-site residue. Positions 310–414 (GVMNQQCKTV…YANELCEHLS (105 aa)) are cleaved as a propeptide — plant-specific insert. The Saposin B-type domain maps to 311 to 416 (VMNQQCKTVV…NELCEHLSTS (106 aa)). 4 disulfides stabilise this stretch: cysteine 316–cysteine 410, cysteine 341–cysteine 382, cysteine 347–cysteine 379, and cysteine 424–cysteine 461. Asparagine 432 is a glycosylation site (N-linked (GlcNAc...) asparagine). A KGE motif motif is present at residues 455-457 (KGE).

This sequence belongs to the peptidase A1 family. Heterodimer of a light chain and a heavy chain. An intermediate form (35 kDa and 30 kDa subunits) is produced first, and undergoes proteolytic processing to remove the internal plant-specific insert (PSI) and the propeptide. There is some heterogeniety at the cleavage site. Interacts (via RGD or KGE motifs) with PLD1 (via C2 domain). Post-translationally, N-glycosylated. Glycans found at Asn-139 include approximately 6% oligomannose, 82% oligosaccharides of the plant modified type with proximal fucose but without xylose and 6% oligosaccharides of the plant modified type with proximal fucose and xylose. Glycans found at Asn-432 include 14% oligosaccharides of the plant modified type with proximal fucose but without xylose and 86% oligosaccharides of the plant modified type with proximal fucose and xylose. Detected only in pistils, not in seeds, roots, midribs, bracts, stamens, pollen, vascular or supporting tissues. Detected in seeds. High amounts are detected in the broad outer region of the upper portion of the stigma, towards the lower portion of the stigma it accumulates at the periphery. Within the stigma, expressed mainly in the epidermic papillae, lower levels are found in the cortical parenchyma. Present mainly in epidermal cells within the stye (at protein level). Expressed in young flower buds, and at lower levels in seeds, pollen and bracteas, but not in roots or leaves.

Its subcellular location is the microsome membrane. The protein resides in the protein storage vacuole. The protein localises to the secreted. It localises to the cell wall. It is found in the extracellular space. Its subcellular location is the extracellular matrix. With respect to regulation, inhibited by the specific aspartic proteinase inhibitors diazoacetyl-noleucine methyl ester and pepstatin. Functionally, aspartic proteinase with a high preference for bonds between hydrophobic residues. Cleaves alpha-lactalbumin but not beta-lactoglobulin. In Cynara cardunculus (Cardoon), this protein is Procardosin-A.